A 175-amino-acid polypeptide reads, in one-letter code: NADH-ubiquinone oxidoreductase chain 6 (175 aa).

Transmembrane regions (helical) follow at residues 1–21 (MMTY…VGFS), 25–45 (SPIY…GIVL), 48–68 (GGSF…LVVF), 88–108 (TVLS…GYCI), and 149–169 (YGTW…LVVM).

It belongs to the complex I subunit 6 family. In terms of assembly, core subunit of respiratory chain NADH dehydrogenase (Complex I) which is composed of 45 different subunits.

The protein resides in the mitochondrion inner membrane. The enzyme catalyses a ubiquinone + NADH + 5 H(+)(in) = a ubiquinol + NAD(+) + 4 H(+)(out). In terms of biological role, core subunit of the mitochondrial membrane respiratory chain NADH dehydrogenase (Complex I) which catalyzes electron transfer from NADH through the respiratory chain, using ubiquinone as an electron acceptor. Essential for the catalytic activity and assembly of complex I. The chain is NADH-ubiquinone oxidoreductase chain 6 (MT-ND6) from Urotrichus talpoides (Japanese shrew mole).